Consider the following 544-residue polypeptide: Chaperonin GroEL 2 (544 aa).

ATP is bound by residues 30–33 (TLGP), 87–91 (DGTTT), Gly-415, 480–482 (NAA), and Asp-496.

The protein belongs to the chaperonin (HSP60) family. As to quaternary structure, forms a cylinder of 14 subunits composed of two heptameric rings stacked back-to-back. Interacts with the co-chaperonin GroES.

The protein resides in the cytoplasm. It catalyses the reaction ATP + H2O + a folded polypeptide = ADP + phosphate + an unfolded polypeptide.. Together with its co-chaperonin GroES, plays an essential role in assisting protein folding. The GroEL-GroES system forms a nano-cage that allows encapsulation of the non-native substrate proteins and provides a physical environment optimized to promote and accelerate protein folding. The protein is Chaperonin GroEL 2 of Albidiferax ferrireducens (strain ATCC BAA-621 / DSM 15236 / T118) (Rhodoferax ferrireducens).